Here is a 503-residue protein sequence, read N- to C-terminus: Cobyric acid synthase (503 aa).

The 200-residue stretch at aspartate 251–phenylalanine 450 folds into the GATase cobBQ-type domain. Cysteine 331 serves as the catalytic Nucleophile. Histidine 442 is a catalytic residue.

The protein belongs to the CobB/CobQ family. CobQ subfamily.

It participates in cofactor biosynthesis; adenosylcobalamin biosynthesis. Catalyzes amidations at positions B, D, E, and G on adenosylcobyrinic A,C-diamide. NH(2) groups are provided by glutamine, and one molecule of ATP is hydrogenolyzed for each amidation. This chain is Cobyric acid synthase, found in Dehalococcoides mccartyi (strain ATCC BAA-2100 / JCM 16839 / KCTC 5957 / BAV1).